Here is a 578-residue protein sequence, read N- to C-terminus: Probable arginine--tRNA ligase, mitochondrial (578 aa).

The transit peptide at 1–16 (MACGFRRSIACQLSRV) directs the protein to the mitochondrion. L-arginine contacts are provided by residues 133 to 135 (SPN), His-144, Tyr-322, Asp-326, and Gln-350. A 'HIGH' region motif is present at residues 133–144 (SPNIAKKFHVGH). Lys-568 carries the N6-acetyllysine modification.

It belongs to the class-I aminoacyl-tRNA synthetase family.

It localises to the mitochondrion membrane. The catalysed reaction is tRNA(Arg) + L-arginine + ATP = L-arginyl-tRNA(Arg) + AMP + diphosphate. In terms of biological role, catalyzes the attachment of arginine to tRNA(Arg) in a two-step reaction: arginine is first activated by ATP to form Arg-AMP and then transferred to the acceptor end of tRNA(Arg). The chain is Probable arginine--tRNA ligase, mitochondrial (Rars2) from Mus musculus (Mouse).